A 670-amino-acid chain; its full sequence is G-protein coupled receptor moody (670 aa).

The Extracellular segment spans residues 1 to 40 (MSDETTISLEDGYPPLEALTTMVPPADATGFSQSLLTFAA). Residues 41 to 61 (VMTFLIMIVGICGNLLTVVAL) traverse the membrane as a helical segment. The Cytoplasmic segment spans residues 62–69 (LKCPKVRN). A helical membrane pass occupies residues 70–90 (VAAAFIISLCIADLLFCALVL). At 91–111 (PFQGLRFVQGTWRHGQVLCRL) the chain is on the extracellular side. Cys-109 and Cys-188 form a disulfide bridge. Residues 112 to 132 (IPFIQYGNIGVSLLCIAMITI) traverse the membrane as a helical segment. Over 133–152 (NRYVMITHHGLYARIYKRHW) the chain is Cytoplasmic. The helical transmembrane segment at 153–173 (IAVMIAACWLFSYGMQLPTLL) threads the bilayer. At 174–202 (GEWGRFGYDSRLQTCSIMTDDHGHSSKTT) the chain is on the extracellular side. A helical membrane pass occupies residues 203 to 223 (LFITAFVIPCLVIIACYAKIF). Residues 224 to 313 (WVVHKSEQRL…AKRNEWRITK (90 aa)) are Cytoplasmic-facing. The tract at residues 258-302 (LPSGAECQPSNRVSSDSSSSFSIDVPETAPSGKQQPTRVKDQREV) is disordered. Over residues 267–279 (SNRVSSDSSSSFS) the composition is skewed to low complexity. A helical membrane pass occupies residues 314–334 (MVLAIFLSFVVCYLPITIVKV). Residues 335 to 345 (ADKNVEHPSLH) are Extracellular-facing. Residues 346–366 (ICSYILLYLSACINPIIYVIM) form a helical membrane-spanning segment. The Cytoplasmic segment spans residues 367–670 (NKQYRKAYKT…LTAKMKFPKD (304 aa)). Disordered stretches follow at residues 461-490 (DLIS…GSNS), 562-622 (ELPP…YMNV), and 636-670 (TNAV…FPKD). Positions 564–584 (PPTPPATSAPTTPAPPPPSSP) are enriched in pro residues. Positions 585-598 (LHPLSTDSSTTTIS) are enriched in low complexity. Polar residues predominate over residues 646 to 660 (GPANTSATVSISGSK).

The protein belongs to the G-protein coupled receptor 1 family. As to expression, isoform A and isoform B are expressed in the head. Isoform B only is expressed in the body. Expressed in embryonic glial cells that are involved in ensheathment and insulation of the nervous system. Both isoforms are expressed in glia that insulate the larval and adult nervous system. Also expressed in the germ cells, the gut, and the heart.

Its subcellular location is the cell membrane. Its function is as follows. Isoform A and isoform B are required in glia to regulate the acute sensitivity to cocaine and to continuously maintain the proper blood-brain barrier (BBB) function. A moody-mediated signaling pathway functions in glia to regulate nervous system insulation and drug-related behaviors. Galphai and Galphao, and the regulator of G protein signaling, loco, are required in the surface glia to achieve effective insulation. The components function by regulating the cortical actin and thereby stabilizing the extended morphology of the surface glia, which in turn is necessary for the formation of septate junctions of sufficient length to achieve proper sealing of the nerve cord. In Drosophila melanogaster (Fruit fly), this protein is G-protein coupled receptor moody.